We begin with the raw amino-acid sequence, 357 residues long: MTQPVQTIDVLLAEHADLERRLSDPDLHSNPDEARKAGRRFARLAPIVGTYRKLMAAREDLETARELAADDDSFTAEVADLESRVAQLDTQLTDMLAPRDSHDADDIVLEVKSGEGGEESALFAADLARMYIRYAERHGWTVTVLDEITSDLGGYKDATLSIRSKGDSADGVWSRMKFEGGVHRVQRVPVTESQGRVHTSAAGVLVYPEPEEVAEVQIDESDLRIDVFRSSGKGGQGVNTTDSAVRITHLPTGVVVTCQNERSQLQNKARALQVLAARLQAMAEEQASAEASADRASQIRTVDRSERIRTYNFPENRITDHRIGFKAHNLDQVLDGDLDALFDALAAADKQSRLQQA.

N5-methylglutamine is present on Q236.

It belongs to the prokaryotic/mitochondrial release factor family. Methylated by PrmC. Methylation increases the termination efficiency of RF1.

Its subcellular location is the cytoplasm. Functionally, peptide chain release factor 1 directs the termination of translation in response to the peptide chain termination codons UAG and UAA. The chain is Peptide chain release factor 1 from Mycobacterium avium (strain 104).